Here is a 655-residue protein sequence, read N- to C-terminus: p-hydroxybenzoic acid efflux pump subunit AaeB (655 aa).

11 helical membrane-spanning segments follow: residues 13–33 (FAVKLATAIVLALFVGFHFQL), 38–58 (WAVLTAAIVAAGPAFAAGGEP), 69–89 (LRIIGTFIGCIAGLVIIIAMI), 93–113 (LLMILVCCIWAGFCTWISSLV), 121–141 (WGLAGYTALIIVITIQPEPLL), 152–172 (EIVIGIVCAIMADLLFSPRSI), 370–390 (LFWLWTGWTSGSGAMVMIAVV), 407–427 (FIYGTLAALPLGLLYFLVIIP), 431–451 (QSMLLLCISLAVLGFFLGIEV), 459–479 (MGALASTINIIVLDNPMTFHF), and 482–502 (FLDSALGQIVGCVLAFTVILL).

This sequence belongs to the aromatic acid exporter ArAE (TC 2.A.85) family.

The protein resides in the cell inner membrane. Functionally, forms an efflux pump with AaeA. Could function as a metabolic relief valve, allowing to eliminate certain compounds when they accumulate to high levels in the cell. This is p-hydroxybenzoic acid efflux pump subunit AaeB from Escherichia coli O6:K15:H31 (strain 536 / UPEC).